The following is a 605-amino-acid chain: Phosphoenolpyruvate carboxykinase [GTP] (605 aa).

Substrate is bound by residues Arg79 and 218–220 (YGG). The Mn(2+) site is built by Lys227 and His247. Ser269 serves as a coordination point for substrate. 270-275 (ACGKTN) contributes to the GTP binding site. The active site involves Cys271. Asp294 is a Mn(2+) binding site. Over residues 364 to 381 (LTDWKGRDWTPQSDEKAA) the composition is skewed to basic and acidic residues. Residues 364–385 (LTDWKGRDWTPQSDEKAAHPNS) form a disordered region. 384–386 (NSR) contacts substrate. GTP-binding positions include Arg386, Arg417, and 513 to 516 (FGEN).

This sequence belongs to the phosphoenolpyruvate carboxykinase [GTP] family. Monomer. Mn(2+) serves as cofactor.

It localises to the cytoplasm. It catalyses the reaction oxaloacetate + GTP = phosphoenolpyruvate + GDP + CO2. It participates in carbohydrate biosynthesis; gluconeogenesis. Catalyzes the conversion of oxaloacetate (OAA) to phosphoenolpyruvate (PEP), the rate-limiting step in the metabolic pathway that produces glucose from lactate and other precursors derived from the citric acid cycle. The protein is Phosphoenolpyruvate carboxykinase [GTP] of Saccharopolyspora erythraea (strain ATCC 11635 / DSM 40517 / JCM 4748 / NBRC 13426 / NCIMB 8594 / NRRL 2338).